The primary structure comprises 126 residues: Protein ApaG (126 aa).

An ApaG domain is found at 2–126; sequence SALDDSIRVE…FRLALPGLLH (125 aa).

The protein is Protein ApaG of Shewanella sp. (strain MR-4).